The chain runs to 187 residues: Accessory gene regulator protein B (187 aa).

Transmembrane regions (helical) follow at residues 49–69, 82–102, 106–126, 144–164, and 166–186; these read ISIF…YMLI, ILCY…LINI, FTYL…YAPA, LSII…PFYA, and FMLL…FPKE.

It belongs to the AgrB family.

It localises to the cell membrane. In terms of biological role, essential for the production of a quorum sensing system signal molecule, the autoinducing peptide (AIP). This quorum sensing system is responsible for the regulation of the expression of virulence factor genes. Involved in the proteolytic processing of AgrD, the precursor of AIP. This is Accessory gene regulator protein B from Staphylococcus aureus (strain Mu50 / ATCC 700699).